A 108-amino-acid polypeptide reads, in one-letter code: Insulin-like peptide 17 (108 aa).

Residues 1–19 (MFSTRGVLLLLSLMAAVAA) form the signal peptide.

It belongs to the insulin family. As to expression, expressed in head neurons and the uterus.

The protein resides in the secreted. Involved in the regulation of the larval diapause. The protein is Insulin-like peptide 17 of Caenorhabditis elegans.